A 501-amino-acid polypeptide reads, in one-letter code: Probable malate:quinone oxidoreductase (501 aa).

Belongs to the MQO family. FAD serves as cofactor.

The catalysed reaction is (S)-malate + a quinone = a quinol + oxaloacetate. It participates in carbohydrate metabolism; tricarboxylic acid cycle; oxaloacetate from (S)-malate (quinone route): step 1/1. In Mycolicibacterium paratuberculosis (strain ATCC BAA-968 / K-10) (Mycobacterium paratuberculosis), this protein is Probable malate:quinone oxidoreductase.